A 213-amino-acid polypeptide reads, in one-letter code: Peptidyl-tRNA hydrolase (213 aa).

Y26 is a binding site for tRNA. The active-site Proton acceptor is H31. Y78, N80, and N126 together coordinate tRNA.

This sequence belongs to the PTH family. In terms of assembly, monomer.

The protein resides in the cytoplasm. The catalysed reaction is an N-acyl-L-alpha-aminoacyl-tRNA + H2O = an N-acyl-L-amino acid + a tRNA + H(+). In terms of biological role, hydrolyzes ribosome-free peptidyl-tRNAs (with 1 or more amino acids incorporated), which drop off the ribosome during protein synthesis, or as a result of ribosome stalling. Functionally, catalyzes the release of premature peptidyl moieties from peptidyl-tRNA molecules trapped in stalled 50S ribosomal subunits, and thus maintains levels of free tRNAs and 50S ribosomes. In Trichormus variabilis (strain ATCC 29413 / PCC 7937) (Anabaena variabilis), this protein is Peptidyl-tRNA hydrolase.